A 193-amino-acid chain; its full sequence is Bcl-2-binding component 3 (193 aa).

2 disordered regions span residues 1 to 31 and 71 to 131; these read MARARQEGSSPEPVEGLARDSPRPFPLGRLM and ALGG…VEEE. Ser10 is modified (phosphoserine). Positions 137–151 match the BH3 motif; it reads IGAQLRRMADDLNAQ.

This sequence belongs to the Bcl-2 family. Interacts with MCL1 and BCL2A1. Interacts with BCL2 and BCL2L1/BCL-XL. Interacts (via BH3 domain) with NOL3 (via CARD domain); this interaction prevents BBC3 association with BCL2 and results in CASP8 activation.

It is found in the mitochondrion. Its function is as follows. Essential mediator of p53/TP53-dependent and p53/TP53-independent apoptosis. Promotes partial unfolding of BCL2L1 and dissociation of BCL2L1 from p53/TP53, releasing the bound p53/TP53 to induce apoptosis. Regulates ER stress-induced neuronal apoptosis. The polypeptide is Bcl-2-binding component 3 (Bbc3) (Mus musculus (Mouse)).